A 625-amino-acid polypeptide reads, in one-letter code: Chaperone protein HtpG (625 aa).

The interval 1-332 (MSKKTNAPVQ…TEDLSLNVSR (332 aa)) is a; substrate-binding. Residues 333–545 (EVVQSSPVMA…KDAMDSQMER (213 aa)) are b. A c region spans residues 546–625 (MMKMMQQEMP…ELIEAATLSR (80 aa)).

Belongs to the heat shock protein 90 family. In terms of assembly, homodimer.

It is found in the cytoplasm. In terms of biological role, molecular chaperone. Has ATPase activity. The protein is Chaperone protein HtpG of Chlorobium phaeovibrioides (strain DSM 265 / 1930) (Prosthecochloris vibrioformis (strain DSM 265)).